We begin with the raw amino-acid sequence, 306 residues long: MNNLQTHISSYLEYCLAQKRLDEKTIKAYRIDLIQFYNEISISDPCKIASYDLEKYIEKMHLKYKPKSVRRKIASIKAFFHYLEYKNIILQNPFNKIQIHFREPVILPKTIPLYIVEKFLFTIYKQRSAAKTNYQKRNALRDAAIVELLFSTGIRISELCNLKISDVNLIDGVILIYGKGSKERILQIGNSSVLNILKEYKNDFYNEIVQCNHFFSSQSGKPLSDQSVRRMINKYASLSSIDLHITPHMFRHTFATSLLEADVDIRYIQEMLGHSSINITQIYTHVAVSKQKDILINKHPRKDFHF.

In terms of domain architecture, Core-binding (CB) spans 2 to 84; it reads NNLQTHISSY…SIKAFFHYLE (83 aa). Residues 106-296 form the Tyr recombinase domain; sequence ILPKTIPLYI…AVSKQKDILI (191 aa). Catalysis depends on residues R155, K179, H248, R251, and H274. Y283 functions as the O-(3'-phospho-DNA)-tyrosine intermediate in the catalytic mechanism.

It belongs to the 'phage' integrase family.

The protein localises to the cytoplasm. Functionally, site-specific tyrosine recombinase, which acts by catalyzing the cutting and rejoining of the recombining DNA molecules. This is Tyrosine recombinase EUBREC_2677 from Agathobacter rectalis (strain ATCC 33656 / DSM 3377 / JCM 17463 / KCTC 5835 / VPI 0990) (Eubacterium rectale).